Here is a 283-residue protein sequence, read N- to C-terminus: Acetylglutamate kinase (283 aa).

Residues G64–G65, R86, and N178 each bind substrate.

Belongs to the acetylglutamate kinase family. ArgB subfamily.

The protein localises to the cytoplasm. It catalyses the reaction N-acetyl-L-glutamate + ATP = N-acetyl-L-glutamyl 5-phosphate + ADP. Its pathway is amino-acid biosynthesis; L-arginine biosynthesis; N(2)-acetyl-L-ornithine from L-glutamate: step 2/4. Functionally, catalyzes the ATP-dependent phosphorylation of N-acetyl-L-glutamate. The polypeptide is Acetylglutamate kinase (Lactococcus lactis subsp. lactis (strain IL1403) (Streptococcus lactis)).